The sequence spans 463 residues: UDP-N-acetylmuramoylalanine--D-glutamate ligase (463 aa).

126 to 132 (GSNGKST) is an ATP binding site.

It belongs to the MurCDEF family.

It localises to the cytoplasm. The catalysed reaction is UDP-N-acetyl-alpha-D-muramoyl-L-alanine + D-glutamate + ATP = UDP-N-acetyl-alpha-D-muramoyl-L-alanyl-D-glutamate + ADP + phosphate + H(+). It functions in the pathway cell wall biogenesis; peptidoglycan biosynthesis. In terms of biological role, cell wall formation. Catalyzes the addition of glutamate to the nucleotide precursor UDP-N-acetylmuramoyl-L-alanine (UMA). This chain is UDP-N-acetylmuramoylalanine--D-glutamate ligase, found in Idiomarina loihiensis (strain ATCC BAA-735 / DSM 15497 / L2-TR).